We begin with the raw amino-acid sequence, 44 residues long: Large ribosomal subunit protein bL34 (44 aa).

Belongs to the bacterial ribosomal protein bL34 family.

The protein is Large ribosomal subunit protein bL34 of Variovorax paradoxus (strain S110).